The chain runs to 367 residues: (E)-2-epi-beta-caryophyllene synthase (367 aa).

Mg(2+) contacts are provided by D93, N234, and S238. Residues 93 to 97 (DDIAE) carry the DDXXE motif motif.

This sequence belongs to the terpene synthase family. The cofactor is Mg(2+). Mn(2+) is required as a cofactor.

The catalysed reaction is (2E,6E)-farnesyl diphosphate = (E)-2-epi-beta-caryophyllene + diphosphate. The protein operates within secondary metabolite biosynthesis; terpenoid biosynthesis. Sesquiterpene synthase converting farnesyl diphosphate to (E)-2-epi-beta-caryophyllene as the major product, and to two other unidentified sesquiterpenes. Has no diterpene synthase activity. This is (E)-2-epi-beta-caryophyllene synthase from Selaginella moellendorffii (Spikemoss).